A 369-amino-acid chain; its full sequence is Queuine tRNA-ribosyltransferase (369 aa).

Catalysis depends on Asp89, which acts as the Proton acceptor. Substrate-binding positions include 89-93 (DSGGF), Asp142, Gln184, and Gly211. An RNA binding region spans residues 242–248 (GGGSPEL). Residue Asp261 is the Nucleophile of the active site. An RNA binding; important for wobble base 34 recognition region spans residues 266 to 270 (TRIAR). 4 residues coordinate Zn(2+): Cys299, Cys301, Cys304, and His330.

It belongs to the queuine tRNA-ribosyltransferase family. As to quaternary structure, homodimer. Within each dimer, one monomer is responsible for RNA recognition and catalysis, while the other monomer binds to the replacement base PreQ1. The cofactor is Zn(2+).

It carries out the reaction 7-aminomethyl-7-carbaguanine + guanosine(34) in tRNA = 7-aminomethyl-7-carbaguanosine(34) in tRNA + guanine. Its pathway is tRNA modification; tRNA-queuosine biosynthesis. Catalyzes the base-exchange of a guanine (G) residue with the queuine precursor 7-aminomethyl-7-deazaguanine (PreQ1) at position 34 (anticodon wobble position) in tRNAs with GU(N) anticodons (tRNA-Asp, -Asn, -His and -Tyr). Catalysis occurs through a double-displacement mechanism. The nucleophile active site attacks the C1' of nucleotide 34 to detach the guanine base from the RNA, forming a covalent enzyme-RNA intermediate. The proton acceptor active site deprotonates the incoming PreQ1, allowing a nucleophilic attack on the C1' of the ribose to form the product. After dissociation, two additional enzymatic reactions on the tRNA convert PreQ1 to queuine (Q), resulting in the hypermodified nucleoside queuosine (7-(((4,5-cis-dihydroxy-2-cyclopenten-1-yl)amino)methyl)-7-deazaguanosine). The protein is Queuine tRNA-ribosyltransferase of Thermotoga maritima (strain ATCC 43589 / DSM 3109 / JCM 10099 / NBRC 100826 / MSB8).